A 209-amino-acid polypeptide reads, in one-letter code: Thiamine-phosphate synthase (209 aa).

Residues 41–45 (QLREK) and N73 contribute to the 4-amino-2-methyl-5-(diphosphooxymethyl)pyrimidine site. Mg(2+) contacts are provided by D74 and D93. S112 provides a ligand contact to 4-amino-2-methyl-5-(diphosphooxymethyl)pyrimidine. 138-140 (TGT) serves as a coordination point for 2-[(2R,5Z)-2-carboxy-4-methylthiazol-5(2H)-ylidene]ethyl phosphate. 4-amino-2-methyl-5-(diphosphooxymethyl)pyrimidine is bound at residue K141. 2-[(2R,5Z)-2-carboxy-4-methylthiazol-5(2H)-ylidene]ethyl phosphate contacts are provided by residues G168 and 188–189 (VS).

Belongs to the thiamine-phosphate synthase family. Mg(2+) serves as cofactor.

It catalyses the reaction 2-[(2R,5Z)-2-carboxy-4-methylthiazol-5(2H)-ylidene]ethyl phosphate + 4-amino-2-methyl-5-(diphosphooxymethyl)pyrimidine + 2 H(+) = thiamine phosphate + CO2 + diphosphate. The enzyme catalyses 2-(2-carboxy-4-methylthiazol-5-yl)ethyl phosphate + 4-amino-2-methyl-5-(diphosphooxymethyl)pyrimidine + 2 H(+) = thiamine phosphate + CO2 + diphosphate. It carries out the reaction 4-methyl-5-(2-phosphooxyethyl)-thiazole + 4-amino-2-methyl-5-(diphosphooxymethyl)pyrimidine + H(+) = thiamine phosphate + diphosphate. The protein operates within cofactor biosynthesis; thiamine diphosphate biosynthesis; thiamine phosphate from 4-amino-2-methyl-5-diphosphomethylpyrimidine and 4-methyl-5-(2-phosphoethyl)-thiazole: step 1/1. Condenses 4-methyl-5-(beta-hydroxyethyl)thiazole monophosphate (THZ-P) and 2-methyl-4-amino-5-hydroxymethyl pyrimidine pyrophosphate (HMP-PP) to form thiamine monophosphate (TMP). This Alkaliphilus oremlandii (strain OhILAs) (Clostridium oremlandii (strain OhILAs)) protein is Thiamine-phosphate synthase.